A 528-amino-acid chain; its full sequence is Probable methylmalonate-semialdehyde/malonate-semialdehyde dehydrogenase [acylating], mitochondrial (528 aa).

The transit peptide at 1–26 directs the protein to the mitochondrion; it reads MLSFKFAKSASKVIGNRNFHSSSASL. 4 residues coordinate NAD(+): Phe-175, Lys-199, Glu-202, and Arg-203. Cys-307 acts as the Nucleophile in catalysis. Glu-408 contributes to the NAD(+) binding site.

Belongs to the aldehyde dehydrogenase family. In terms of assembly, homotetramer.

The protein resides in the mitochondrion. The enzyme catalyses 2-methyl-3-oxopropanoate + NAD(+) + CoA + H2O = propanoyl-CoA + hydrogencarbonate + NADH + H(+). It carries out the reaction 3-oxopropanoate + NAD(+) + CoA + H2O = hydrogencarbonate + acetyl-CoA + NADH + H(+). Probable malonate and methylmalonate semialdehyde dehydrogenase involved in the catabolism of valine, thymine, and compounds catabolized by way of beta-alanine, including uracil and cytidine. The polypeptide is Probable methylmalonate-semialdehyde/malonate-semialdehyde dehydrogenase [acylating], mitochondrial (mmsdh) (Dictyostelium discoideum (Social amoeba)).